The following is a 550-amino-acid chain: M-phase inducer phosphatase 1-B (550 aa).

Disordered regions lie at residues 76–98 (NLGD…GKVE) and 285–335 (SPSM…QRRG). Positions 290 to 310 (EKLDRPMLKRPVRPLDSETPV) are enriched in basic and acidic residues. The span at 322–335 (LQPQEENFQPQRRG) shows a compositional bias: polar residues. The Rhodanese domain maps to 401-508 (LVEKIFIIDC…FFPEYKELCE (108 aa)). C457 is a catalytic residue.

The protein belongs to the MPI phosphatase family.

It catalyses the reaction O-phospho-L-tyrosyl-[protein] + H2O = L-tyrosyl-[protein] + phosphate. Tyrosine protein phosphatase which functions as a dosage-dependent inducer of mitotic progression. Directly dephosphorylates CDK1 and stimulates its kinase activity. The protein is M-phase inducer phosphatase 1-B (cdc25-1-b) of Xenopus laevis (African clawed frog).